Consider the following 156-residue polypeptide: MKARLIATGERAPSWVAQGFAEYQKRLSHWLPFELVEIEPGLRGKGRDPRRATEDEGKRVIAALPKNAYVVALDVPGRQLSSEQLAQRLEHWRGQGRDLAFLIGGPEGHSPEVSALADEKWSIGPLTLPHMLVRLVVAEQLYRAAAMLANHPYHRA.

Residues Leu-73, Gly-104, and Ile-123–Leu-128 each bind S-adenosyl-L-methionine.

Belongs to the RNA methyltransferase RlmH family. In terms of assembly, homodimer.

It is found in the cytoplasm. It catalyses the reaction pseudouridine(1915) in 23S rRNA + S-adenosyl-L-methionine = N(3)-methylpseudouridine(1915) in 23S rRNA + S-adenosyl-L-homocysteine + H(+). In terms of biological role, specifically methylates the pseudouridine at position 1915 (m3Psi1915) in 23S rRNA. The polypeptide is Ribosomal RNA large subunit methyltransferase H (Stenotrophomonas maltophilia (strain R551-3)).